We begin with the raw amino-acid sequence, 521 residues long: Replicase polyprotein 1ab (521 aa).

In terms of domain architecture, AV-Nsp11N/CoV-Nsp15M spans G1–V58. A NendoU domain is found at E75 to P216. Residues H104, H119, K159, K263, D347, K391, and E424 contribute to the active site. The 300-residue stretch at Q219–V518 folds into the Nidovirus-type SAM-dependent 2'-O-MTase domain.

Its function is as follows. The replicase polyprotein of coronaviruses is a multifunctional protein: it contains the activities necessary for the transcription of negative stranded RNA, leader RNA, subgenomic mRNAs and progeny virion RNA as well as proteinases responsible for the cleavage of the polyprotein into functional products. Functionally, nendoU is a Mn(2+)-dependent, uridylate-specific enzyme, which leaves 2'-3'-cyclic phosphates 5' to the cleaved bond. This is Replicase polyprotein 1ab (rep) from Gallus gallus (Chicken).